The sequence spans 456 residues: E3 ubiquitin-protein ligase RNF25 (456 aa).

The RWD domain maps to 18 to 127 (SEVEVLESIY…EKGKEILTDN (110 aa)). Zn(2+)-binding residues include Cys-134, Cys-137, Cys-152, His-154, His-157, Cys-160, Cys-195, and Cys-198. The RING-type zinc finger occupies 134–199 (CVICLYGFQE…AVGVQCPVCR (66 aa)). The segment at 269–456 (LEPESAVDVS…PLGLESEEGS (188 aa)) is disordered. Residues 288-332 (SAEQSTSLADQSTLPTSLPMTTQYTYEKTSGAGPNQQRPGETQKS) are compositionally biased toward polar residues. 2 stretches are compositionally biased toward basic and acidic residues: residues 364 to 388 (SEIHELPPPEKPLKETVDLKAEPRN) and 410 to 421 (RTRDCARWERSK).

It belongs to the RNF25 family. As to quaternary structure, interacts with UBE2D2, and may also interact with UBE2E1 and UBE2E3. Interacts with RELA/p65. Post-translationally, ubiquitinated; autoubiquitinated. In terms of tissue distribution, ubiquitous.

Its subcellular location is the cytoplasm. It catalyses the reaction S-ubiquitinyl-[E2 ubiquitin-conjugating enzyme]-L-cysteine + [acceptor protein]-L-lysine = [E2 ubiquitin-conjugating enzyme]-L-cysteine + N(6)-ubiquitinyl-[acceptor protein]-L-lysine.. Its pathway is protein modification; protein ubiquitination. Its function is as follows. E3 ubiquitin-protein ligase that plays a key role in the RNF14-RNF25 translation quality control pathway, a pathway that takes place when a ribosome has stalled during translation, and which promotes ubiquitination and degradation of translation factors on stalled ribosomes. Catalyzes ubiquitination of RPS27A in response to ribosome collisions, promoting activation of RNF14. RNF25 catalyzes ubiquitination of other ribosomal proteins on stalled ribosomes, such as RPL0, RPL1, RPL12, RPS13 and RPS17. Also involved in ubiquitination and degradation of stalled ETF1/eRF1. Independently of its function in the response to stalled ribosomes, mediates ubiquitination and subsequent proteasomal degradation of NKD2. May also stimulate transcription mediated by NF-kappa-B via its interaction with RELA/p65. The chain is E3 ubiquitin-protein ligase RNF25 from Mus musculus (Mouse).